We begin with the raw amino-acid sequence, 382 residues long: Sphingoid long-chain base transporter RSB1 (382 aa).

Topologically, residues 1 to 34 are extracellular; it reads MSNATNNTLGSLLPQLEAAANSNSLYGGMVPNLR. N3 and N6 each carry an N-linked (GlcNAc...) asparagine glycan. Residues 35-55 traverse the membrane as a helical segment; the sequence is FNITMIVIWGILLTIHVVQLL. Residues 56–57 are Cytoplasmic-facing; it reads MR. Residues 58 to 78 traverse the membrane as a helical segment; it reads QYWFSIAFICTGILEVLGFIG. The Extracellular segment spans residues 79–90; sequence RTWSHSNVADMD. The chain crosses the membrane as a helical span at residues 91–111; that stretch reads AFLLNMICLTIAPVFTMGGIY. The Cytoplasmic portion of the chain corresponds to 112–135; the sequence is YQLAKLIEVYGHRFSLLPSPMAYS. The helical transmembrane segment at 136–156 threads the bilayer; it reads FIFICSDIVSLVVQAVGGGLC. Topologically, residues 157 to 171 are extracellular; sequence GVAVTDGTSTTTGNH. Residues 172 to 192 form a helical membrane-spanning segment; it reads VFIAGLAIQVASMAIFLMLWF. Residues 193–241 are Cytoplasmic-facing; that stretch reads HFLFRIYISVRWEHINSRPISLSLLKISQTEVDYLYREKFHFLRLEPKR. A helical membrane pass occupies residues 242-262; the sequence is WVFHYFNLAMTVAVLTIFTRC. Residues 263-281 lie on the Extracellular side of the membrane; it reads CYRLAELVVGWDGYLITHE. Residues 282-302 form a helical membrane-spanning segment; the sequence is WYFIILDALMMAIATVTLTIF. Residues 303–382 are Cytoplasmic-facing; it reads HPGFAFKGRS…LFSSKKKAKL (80 aa).

It belongs to the lipid-translocating exporter (LTE) (TC 9.A.26.1) family.

The protein resides in the cell membrane. Catalyzes the ATP-dependent translocation of sphingoid long-chain bases (LCBs) from the cytoplasmic site toward the extracytoplasmic side of the membrane (flip-flop). Involved in the establishment of the functional lipid asymmetry of the plasma membrane. Regulates intracellular levels of LCBs, sphingolipid precursors that are growth inhibitory at increased levels. In Saccharomyces cerevisiae (strain RM11-1a) (Baker's yeast), this protein is Sphingoid long-chain base transporter RSB1 (RSB1).